Here is a 318-residue protein sequence, read N- to C-terminus: Transaldolase (318 aa).

Catalysis depends on Lys132, which acts as the Schiff-base intermediate with substrate.

The protein belongs to the transaldolase family. Type 1 subfamily. Homodimer.

It is found in the cytoplasm. The catalysed reaction is D-sedoheptulose 7-phosphate + D-glyceraldehyde 3-phosphate = D-erythrose 4-phosphate + beta-D-fructose 6-phosphate. It functions in the pathway carbohydrate degradation; pentose phosphate pathway; D-glyceraldehyde 3-phosphate and beta-D-fructose 6-phosphate from D-ribose 5-phosphate and D-xylulose 5-phosphate (non-oxidative stage): step 2/3. In terms of biological role, transaldolase is important for the balance of metabolites in the pentose-phosphate pathway. This chain is Transaldolase, found in Shewanella woodyi (strain ATCC 51908 / MS32).